Consider the following 754-residue polypeptide: Disintegrin and metalloproteinase domain-containing protein 7 (754 aa).

Positions 1-18 are cleaved as a signal peptide; sequence MLPGCIFLMILLIPQVKE. Residues 19-176 constitute a propeptide that is removed on maturation; it reads KFILGVEGQQ…NYSCTELNFT (158 aa). Residues 19 to 668 are Extracellular-facing; that stretch reads KFILGVEGQQ…ACEETLHVTN (650 aa). 4 N-linked (GlcNAc...) asparagine glycosylation sites follow: Asn84, Asn167, Asn174, and Asn184. The 196-residue stretch at 199 to 394 folds into the Peptidase M12B domain; sequence KYVELFIVAD…YKPTCMLNIP (196 aa). 4 disulfides stabilise this stretch: Cys310–Cys389, Cys350–Cys373, Cys352–Cys357, and Cys460–Cys480. The region spanning 402 to 488 is the Disintegrin domain; the sequence is FQFCGNKKLD…ACPKDQFRVN (87 aa). N-linked (GlcNAc...) asparagine glycans are attached at residues Asn584 and Asn668. The helical transmembrane segment at 669–689 threads the bilayer; it reads ITILVVVLVLVIVGIGVLILL. The Cytoplasmic portion of the chain corresponds to 690–754; sequence VRYRKCIKLK…GIADPNQSAK (65 aa).

Interacts with ITM2B in sperm; the interaction increases following capacitation. Interacts with HSPA5 and CANX.

It is found in the membrane. Required for normal male fertility via maintenance of epithelial cell morphology in the caput epididymis and subsequently correct epididymis lumen structure required for sperm development. Plays a role in sperm motility, flagella morphology and tyrosine phosphorylation during sperm capacitance. Plays a role in normal expression levels of HSPA5, ITM2B and ADAM2 in sperm both prior to and post-capacitation. This is a non catalytic metalloprotease-like protein. The protein is Disintegrin and metalloproteinase domain-containing protein 7 of Homo sapiens (Human).